The following is a 269-amino-acid chain: 5'-nucleotidase SurE (269 aa).

Residues aspartate 11, aspartate 12, serine 43, and asparagine 101 each contribute to the a divalent metal cation site.

This sequence belongs to the SurE nucleotidase family. A divalent metal cation serves as cofactor.

It is found in the cytoplasm. The enzyme catalyses a ribonucleoside 5'-phosphate + H2O = a ribonucleoside + phosphate. Functionally, nucleotidase that shows phosphatase activity on nucleoside 5'-monophosphates. The sequence is that of 5'-nucleotidase SurE from Prochlorococcus marinus (strain MIT 9303).